The chain runs to 501 residues: Phenylalanine--tRNA ligase alpha subunit (501 aa).

2 residues coordinate L-phenylalanine: Thr340 and Phe423. Position 425 (Glu425) interacts with Mg(2+). Residue Phe448 participates in L-phenylalanine binding.

This sequence belongs to the class-II aminoacyl-tRNA synthetase family. Phe-tRNA synthetase alpha subunit type 2 subfamily. In terms of assembly, tetramer of two alpha and two beta subunits. It depends on Mg(2+) as a cofactor.

It is found in the cytoplasm. It carries out the reaction tRNA(Phe) + L-phenylalanine + ATP = L-phenylalanyl-tRNA(Phe) + AMP + diphosphate + H(+). The polypeptide is Phenylalanine--tRNA ligase alpha subunit (Methanococcus maripaludis (strain C5 / ATCC BAA-1333)).